A 362-amino-acid chain; its full sequence is PDZ and LIM domain protein 3 (362 aa).

One can recognise a PDZ domain in the interval 1–84; that stretch reads MPQNVVLPGP…QLCLKIDRAE (84 aa). Phosphoserine is present on residues serine 18, serine 92, and serine 263. The tract at residues 261 to 282 is disordered; the sequence is DGSDDRPAGTRSVRPVTKVHGG. The 60-residue stretch at 290–349 folds into the LIM zinc-binding domain; it reads PLCDKCGSGIVGAVVKARDKYRHPECFVCADCNLNLKQKGYFFVEGELYCEMHARARTRP.

In terms of assembly, interacts with ACTN2. Forms a heterodimer with PDLIM4 (via LIM domain). Highly expressed in skeletal muscle and at low levels in the heart.

Its subcellular location is the cytoplasm. The protein localises to the myofibril. It localises to the sarcomere. The protein resides in the z line. In terms of biological role, may play a role in the organization of actin filament arrays within muscle cells. In Rattus norvegicus (Rat), this protein is PDZ and LIM domain protein 3 (Pdlim3).